We begin with the raw amino-acid sequence, 858 residues long: Chitin synthase 2 (858 aa).

The span at 1–12 shows a compositional bias: basic and acidic residues; sequence MYPEGPKPEHDQ. The interval 1–116 is disordered; it reads MYPEGPKPEH…GQAPRRQPRR (116 aa). The segment covering 15–24 has biased composition (polar residues); the sequence is LQDTQFSNQP. 2 stretches are compositionally biased toward pro residues: residues 52–68 and 76–89; these read AYPPTQYPTSPPPPNFP and PYPPFNNNPSPVSP. 7 helical membrane passes run 500 to 517, 540 to 560, 586 to 606, 621 to 641, 665 to 685, 799 to 819, and 825 to 845; these read RWLNGSFFAGVYALYHWR, TYNLIFSWFALGNFYLTFFIL, LHTVFNYIYIVLIVIQFIMAL, MVFFAILMVYMMFAAIWITVV, NIIISLCATYVMYFVSSFMFL, VLAWIISNLALVVAIANTTVI, and ASIYLGFILWSVAGLSVIRFT.

The protein belongs to the chitin synthase family.

The protein resides in the cell membrane. The enzyme catalyses [(1-&gt;4)-N-acetyl-beta-D-glucosaminyl](n) + UDP-N-acetyl-alpha-D-glucosamine = [(1-&gt;4)-N-acetyl-beta-D-glucosaminyl](n+1) + UDP + H(+). Functionally, polymerizes chitin, a structural polymer of the cell wall and septum, by transferring the sugar moiety of UDP-GlcNAc to the non-reducing end of the growing chitin polymer. The sequence is that of Chitin synthase 2 (CHS2) from Rhizopus oligosporus (Rhizopus microsporus var. oligosporus).